The following is a 365-amino-acid chain: Peptide chain release factor 2 (365 aa).

Gln-252 carries the N5-methylglutamine modification.

It belongs to the prokaryotic/mitochondrial release factor family. Methylated by PrmC. Methylation increases the termination efficiency of RF2.

It localises to the cytoplasm. Functionally, peptide chain release factor 2 directs the termination of translation in response to the peptide chain termination codons UGA and UAA. In Haemophilus ducreyi (strain 35000HP / ATCC 700724), this protein is Peptide chain release factor 2.